A 528-amino-acid polypeptide reads, in one-letter code: Ankyrin repeat and death domain-containing protein 1B (528 aa).

10 ANK repeats span residues Pro67–Val96, Met100–Val129, His133–Ala162, Asp166–Gln197, Lys201–Glu230, Gly234–Glu263, Leu267–Gln296, Pro300–Ile329, Lys333–Ala362, and Gln366–Trp395. The Death domain occupies Thr427–Lys515.

This chain is Ankyrin repeat and death domain-containing protein 1B (ANKDD1B), found in Homo sapiens (Human).